A 164-amino-acid chain; its full sequence is NADH-quinone oxidoreductase subunit I (164 aa).

4Fe-4S ferredoxin-type domains are found at residues 55–84 and 95–124; these read RRYEGGEERCVACKLCEAICPAQAIYIEID and KVYDIDLFKCIYCGLCEEACPVEAIVMGPY. Cysteine 64, cysteine 67, cysteine 70, cysteine 74, cysteine 104, cysteine 107, cysteine 110, and cysteine 114 together coordinate [4Fe-4S] cluster.

It belongs to the complex I 23 kDa subunit family. In terms of assembly, NDH-1 is composed of 14 different subunits. Subunits NuoA, H, J, K, L, M, N constitute the membrane sector of the complex. [4Fe-4S] cluster serves as cofactor.

The protein resides in the cell inner membrane. It carries out the reaction a quinone + NADH + 5 H(+)(in) = a quinol + NAD(+) + 4 H(+)(out). In terms of biological role, NDH-1 shuttles electrons from NADH, via FMN and iron-sulfur (Fe-S) centers, to quinones in the respiratory chain. The immediate electron acceptor for the enzyme in this species is believed to be ubiquinone. Couples the redox reaction to proton translocation (for every two electrons transferred, four hydrogen ions are translocated across the cytoplasmic membrane), and thus conserves the redox energy in a proton gradient. The polypeptide is NADH-quinone oxidoreductase subunit I (Magnetococcus marinus (strain ATCC BAA-1437 / JCM 17883 / MC-1)).